The chain runs to 506 residues: 2-isopropylmalate synthase (506 aa).

The Pyruvate carboxyltransferase domain maps to 4–266; sequence ILFMDTTLRD…EPSMTLKEIK (263 aa). Mn(2+) is bound by residues Asp-13, His-201, His-203, and Asn-237. Positions 390–506 are regulatory domain; sequence NITQLQVHFV…KLKSFIQLVK (117 aa).

This sequence belongs to the alpha-IPM synthase/homocitrate synthase family. LeuA type 1 subfamily. Homodimer. It depends on Mn(2+) as a cofactor.

Its subcellular location is the cytoplasm. The enzyme catalyses 3-methyl-2-oxobutanoate + acetyl-CoA + H2O = (2S)-2-isopropylmalate + CoA + H(+). Its pathway is amino-acid biosynthesis; L-leucine biosynthesis; L-leucine from 3-methyl-2-oxobutanoate: step 1/4. In terms of biological role, catalyzes the condensation of the acetyl group of acetyl-CoA with 3-methyl-2-oxobutanoate (2-ketoisovalerate) to form 3-carboxy-3-hydroxy-4-methylpentanoate (2-isopropylmalate). This Bacillus cereus (strain AH820) protein is 2-isopropylmalate synthase.